A 127-amino-acid polypeptide reads, in one-letter code: Major sperm protein 152 (127 aa).

Position 2 is an N-acetylthreonine (Thr-2). One can recognise an MSP domain in the interval 9 to 126 (DIQTQPGTKI…RRKNLPIEYN (118 aa)).

In terms of tissue distribution, sperm.

It is found in the cell projection. The protein localises to the pseudopodium. Its subcellular location is the cytoplasm. It localises to the cytoskeleton. Functionally, central component in molecular interactions underlying sperm crawling. Forms an extensive filament system that extends from sperm villipoda, along the leading edge of the pseudopod. The polypeptide is Major sperm protein 152 (msp-152) (Caenorhabditis elegans).